A 339-amino-acid chain; its full sequence is DNA-directed RNA polymerase subunit alpha (339 aa).

The tract at residues 1 to 233 (MVREKVRIST…DLFIPFLHAE (233 aa)) is alpha N-terminal domain (alpha-NTD). Residues 267–339 (IALKSIFIDQ…FTINLPKNKF (73 aa)) form an alpha C-terminal domain (alpha-CTD) region.

The protein belongs to the RNA polymerase alpha chain family. As to quaternary structure, in plastids the minimal PEP RNA polymerase catalytic core is composed of four subunits: alpha, beta, beta', and beta''. When a (nuclear-encoded) sigma factor is associated with the core the holoenzyme is formed, which can initiate transcription.

The protein localises to the plastid. The protein resides in the chloroplast. It carries out the reaction RNA(n) + a ribonucleoside 5'-triphosphate = RNA(n+1) + diphosphate. DNA-dependent RNA polymerase catalyzes the transcription of DNA into RNA using the four ribonucleoside triphosphates as substrates. The sequence is that of DNA-directed RNA polymerase subunit alpha from Populus alba (White poplar).